A 270-amino-acid polypeptide reads, in one-letter code: Triosephosphate isomerase (270 aa).

27–29 contributes to the substrate binding site; it reads NWK. Catalysis depends on H114, which acts as the Electrophile. Catalysis depends on E184, which acts as the Proton acceptor. Substrate-binding positions include G190, S230, and 251–252; that span reads GG.

The protein belongs to the triosephosphate isomerase family. In terms of assembly, homodimer.

The protein localises to the cytoplasm. It carries out the reaction D-glyceraldehyde 3-phosphate = dihydroxyacetone phosphate. It functions in the pathway carbohydrate biosynthesis; gluconeogenesis. It participates in carbohydrate degradation; glycolysis; D-glyceraldehyde 3-phosphate from glycerone phosphate: step 1/1. In terms of biological role, involved in the gluconeogenesis. Catalyzes stereospecifically the conversion of dihydroxyacetone phosphate (DHAP) to D-glyceraldehyde-3-phosphate (G3P). This is Triosephosphate isomerase from Chlamydia muridarum (strain MoPn / Nigg).